The following is a 189-amino-acid chain: Interferon alpha-5 (189 aa).

The first 23 residues, 1–23, serve as a signal peptide directing secretion; the sequence is MARLCAFLMVLPVLSYWPTCSLG. 2 disulfide bridges follow: Cys24–Cys122 and Cys52–Cys162. Asn101 carries N-linked (GlcNAc...) asparagine glycosylation.

The protein belongs to the alpha/beta interferon family.

The protein localises to the secreted. Its function is as follows. Produced by macrophages, IFN-alpha have antiviral activities. Interferon stimulates the production of two enzymes: a protein kinase and an oligoadenylate synthetase. The polypeptide is Interferon alpha-5 (Ifna5) (Mus musculus (Mouse)).